We begin with the raw amino-acid sequence, 367 residues long: Uroporphyrinogen decarboxylase (367 aa).

Substrate is bound by residues 28–32 (RQAGR), D78, Y158, T213, and H334.

It belongs to the uroporphyrinogen decarboxylase family. Homodimer.

It is found in the cytoplasm. The enzyme catalyses uroporphyrinogen III + 4 H(+) = coproporphyrinogen III + 4 CO2. It functions in the pathway porphyrin-containing compound metabolism; protoporphyrin-IX biosynthesis; coproporphyrinogen-III from 5-aminolevulinate: step 4/4. Catalyzes the decarboxylation of four acetate groups of uroporphyrinogen-III to yield coproporphyrinogen-III. This chain is Uroporphyrinogen decarboxylase, found in Ralstonia pickettii (strain 12J).